The following is an 839-amino-acid chain: Probable beta-glucosidase I (839 aa).

A glycan (N-linked (GlcNAc...) asparagine) is linked at Asn197. Asp225 is an active-site residue. The PA14 domain occupies 395–555 (DGKKGFSFRV…SQEELIAKAA (161 aa)).

This sequence belongs to the glycosyl hydrolase 3 family.

The protein resides in the secreted. The catalysed reaction is Hydrolysis of terminal, non-reducing beta-D-glucosyl residues with release of beta-D-glucose.. It participates in glycan metabolism; cellulose degradation. Functionally, beta-glucosidases are one of a number of cellulolytic enzymes involved in the degradation of cellulosic biomass. Catalyzes the last step releasing glucose from the inhibitory cellobiose. The chain is Probable beta-glucosidase I (bglI) from Aspergillus terreus (strain NIH 2624 / FGSC A1156).